Here is a 361-residue protein sequence, read N- to C-terminus: Terpene synthase 6 (361 aa).

The short motif at 81–86 is the DDxx(x)D/E motif element; sequence DDVLDA. The short motif at 223 to 231 is the NDxxSxxxD/E motif element; that stretch reads NDLVSYEKE.

The protein belongs to the terpene synthase family.

It catalyses the reaction (2E,6E)-farnesyl diphosphate = (2S,3R,6S,9S)-(-)-protoillud-7-ene + diphosphate. Terpene synthase that converts its substrate farnesyl diphosphate (FPP) into the sesquiterpene (2S,3R,6S,9S)-(-)-protoillud-7-ene. The chain is Terpene synthase 6 from Dictyostelium discoideum (Social amoeba).